The following is a 449-amino-acid chain: Tubulin alpha-2 chain (449 aa).

Residue glutamine 11 participates in GTP binding. Lysine 40 bears the N6-acetyllysine mark. GTP-binding residues include glutamate 71, serine 140, glycine 144, threonine 145, threonine 179, asparagine 206, and asparagine 228. Residue glutamate 71 coordinates Mg(2+). Glutamate 254 is a catalytic residue.

It belongs to the tubulin family. Dimer of alpha and beta chains. A typical microtubule is a hollow water-filled tube with an outer diameter of 25 nm and an inner diameter of 15 nM. Alpha-beta heterodimers associate head-to-tail to form protofilaments running lengthwise along the microtubule wall with the beta-tubulin subunit facing the microtubule plus end conferring a structural polarity. Microtubules usually have 13 protofilaments but different protofilament numbers can be found in some organisms and specialized cells. It depends on Mg(2+) as a cofactor. In terms of processing, undergoes a tyrosination/detyrosination cycle, the cyclic removal and re-addition of a C-terminal tyrosine residue by the enzymes tubulin tyrosine carboxypeptidase (TTCP) and tubulin tyrosine ligase (TTL), respectively. Post-translationally, acetylation of alpha chains at Lys-40 stabilizes microtubules and affects affinity and processivity of microtubule motors. This modification has a role in multiple cellular functions, ranging from cell motility, cell cycle progression or cell differentiation to intracellular trafficking and signaling. During the early stages of oogenesis lky/Alpha-tubulin N-acetyltransferase 2 is the main acetyltransferase responsible for Lys-40 acetylation in germline cells while Atat/alpha-tubulin N-acetyltransferase 1 is the main acetyltransferase responsible for Lys-40 acetylation in somatic cells.

It is found in the cytoplasm. The protein resides in the cytoskeleton. The enzyme catalyses GTP + H2O = GDP + phosphate + H(+). Functionally, tubulin is the major constituent of microtubules, a cylinder consisting of laterally associated linear protofilaments composed of alpha- and beta-tubulin heterodimers. Microtubules grow by the addition of GTP-tubulin dimers to the microtubule end, where a stabilizing cap forms. Below the cap, tubulin dimers are in GDP-bound state, owing to GTPase activity of alpha-tubulin. The polypeptide is Tubulin alpha-2 chain (alphaTub85E) (Drosophila melanogaster (Fruit fly)).